A 365-amino-acid polypeptide reads, in one-letter code: Anthranilate phosphoribosyltransferase (365 aa).

5-phospho-alpha-D-ribose 1-diphosphate contacts are provided by residues glycine 96, 99–100 (GD), threonine 104, 106–109 (NIST), 124–132 (KHGNRSVSS), and serine 136. Glycine 96 lines the anthranilate pocket. Serine 108 contributes to the Mg(2+) binding site. An anthranilate-binding site is contributed by asparagine 127. Arginine 182 lines the anthranilate pocket. Mg(2+)-binding residues include aspartate 240 and glutamate 241.

Belongs to the anthranilate phosphoribosyltransferase family. In terms of assembly, homodimer. Mg(2+) is required as a cofactor.

It catalyses the reaction N-(5-phospho-beta-D-ribosyl)anthranilate + diphosphate = 5-phospho-alpha-D-ribose 1-diphosphate + anthranilate. It functions in the pathway amino-acid biosynthesis; L-tryptophan biosynthesis; L-tryptophan from chorismate: step 2/5. In terms of biological role, catalyzes the transfer of the phosphoribosyl group of 5-phosphorylribose-1-pyrophosphate (PRPP) to anthranilate to yield N-(5'-phosphoribosyl)-anthranilate (PRA). This Colwellia psychrerythraea (strain 34H / ATCC BAA-681) (Vibrio psychroerythus) protein is Anthranilate phosphoribosyltransferase.